The sequence spans 257 residues: Imidazole glycerol phosphate synthase subunit HisF (257 aa).

Active-site residues include D11 and D130.

It belongs to the HisA/HisF family. Heterodimer of HisH and HisF.

The protein resides in the cytoplasm. The enzyme catalyses 5-[(5-phospho-1-deoxy-D-ribulos-1-ylimino)methylamino]-1-(5-phospho-beta-D-ribosyl)imidazole-4-carboxamide + L-glutamine = D-erythro-1-(imidazol-4-yl)glycerol 3-phosphate + 5-amino-1-(5-phospho-beta-D-ribosyl)imidazole-4-carboxamide + L-glutamate + H(+). It participates in amino-acid biosynthesis; L-histidine biosynthesis; L-histidine from 5-phospho-alpha-D-ribose 1-diphosphate: step 5/9. In terms of biological role, IGPS catalyzes the conversion of PRFAR and glutamine to IGP, AICAR and glutamate. The HisF subunit catalyzes the cyclization activity that produces IGP and AICAR from PRFAR using the ammonia provided by the HisH subunit. In Afipia carboxidovorans (strain ATCC 49405 / DSM 1227 / KCTC 32145 / OM5) (Oligotropha carboxidovorans), this protein is Imidazole glycerol phosphate synthase subunit HisF.